The chain runs to 236 residues: 2,3,4,5-tetrahydropyridine-2,6-dicarboxylate N-acetyltransferase (236 aa).

The protein belongs to the transferase hexapeptide repeat family. DapH subfamily.

It catalyses the reaction (S)-2,3,4,5-tetrahydrodipicolinate + acetyl-CoA + H2O = L-2-acetamido-6-oxoheptanedioate + CoA. It functions in the pathway amino-acid biosynthesis; L-lysine biosynthesis via DAP pathway; LL-2,6-diaminopimelate from (S)-tetrahydrodipicolinate (acetylase route): step 1/3. Catalyzes the transfer of an acetyl group from acetyl-CoA to tetrahydrodipicolinate. This chain is 2,3,4,5-tetrahydropyridine-2,6-dicarboxylate N-acetyltransferase, found in Pediococcus pentosaceus (strain ATCC 25745 / CCUG 21536 / LMG 10740 / 183-1w).